The chain runs to 335 residues: Tryptophan--tRNA ligase (335 aa).

ATP is bound by residues 13-15 (QPS) and 21-22 (GN). The 'HIGH' region motif lies at 14–22 (PSGNLTIGN). Asp136 provides a ligand contact to L-tryptophan. ATP is bound by residues 148-150 (GQD), Ile187, and 196-200 (KMSKS). The short motif at 196–200 (KMSKS) is the 'KMSKS' region element.

Belongs to the class-I aminoacyl-tRNA synthetase family. Homodimer.

Its subcellular location is the cytoplasm. It catalyses the reaction tRNA(Trp) + L-tryptophan + ATP = L-tryptophyl-tRNA(Trp) + AMP + diphosphate + H(+). Catalyzes the attachment of tryptophan to tRNA(Trp). The polypeptide is Tryptophan--tRNA ligase (Buchnera aphidicola subsp. Acyrthosiphon pisum (strain APS) (Acyrthosiphon pisum symbiotic bacterium)).